Here is a 538-residue protein sequence, read N- to C-terminus: Putative cysteine ligase BshC (538 aa).

The stretch at 421–485 (VEEKFQEAKK…LERRHEVELN (65 aa)) forms a coiled coil.

Belongs to the BshC family.

Functionally, involved in bacillithiol (BSH) biosynthesis. May catalyze the last step of the pathway, the addition of cysteine to glucosamine malate (GlcN-Mal) to generate BSH. The protein is Putative cysteine ligase BshC of Bacillus cytotoxicus (strain DSM 22905 / CIP 110041 / 391-98 / NVH 391-98).